A 180-amino-acid polypeptide reads, in one-letter code: MKQLLEFIPLILFFVVYKLAGIREAAIALIIATIFQMLILKLKYGKIEKQQIIMGIAVVFFGTLTAYFNKVEYLQWKVTIVYALFALILLISQYGFKKPLIEKLLGKEIQLPEKIWNKLNLAWAGFFILCMLINIYISQYCSEEVWVDFKSFGIIAMTFIATLFTGIYVYRYLPKDDQNK.

The next 5 membrane-spanning stretches (helical) occupy residues 11–31 (ILFFVVYKLAGIREAAIALII), 52–72 (IIMGIAVVFFGTLTAYFNKVE), 76–96 (WKVTIVYALFALILLISQYGF), 121–141 (LAWAGFFILCMLINIYISQYC), and 149–169 (FKSFGIIAMTFIATLFTGIYV).

It belongs to the YciB family.

It is found in the cell inner membrane. Functionally, plays a role in cell envelope biogenesis, maintenance of cell envelope integrity and membrane homeostasis. The polypeptide is Inner membrane-spanning protein YciB (Mannheimia succiniciproducens (strain KCTC 0769BP / MBEL55E)).